The chain runs to 196 residues: UPF0319 protein VV0948 (196 aa).

A signal peptide spans 1 to 19 (MKKMMILSALALFSSSLFA).

Belongs to the UPF0319 family.

The chain is UPF0319 protein VV0948 from Vibrio vulnificus (strain YJ016).